Here is a 343-residue protein sequence, read N- to C-terminus: Biotin synthase (343 aa).

The region spanning 36–254 (NTIQISTLLS…IAVARIMMPK (219 aa)) is the Radical SAM core domain. Residues Cys-51, Cys-55, and Cys-58 each contribute to the [4Fe-4S] cluster site. The [2Fe-2S] cluster site is built by Cys-95, Cys-126, Cys-186, and Arg-258.

It belongs to the radical SAM superfamily. Biotin synthase family. As to quaternary structure, homodimer. [4Fe-4S] cluster serves as cofactor. Requires [2Fe-2S] cluster as cofactor.

It catalyses the reaction (4R,5S)-dethiobiotin + (sulfur carrier)-SH + 2 reduced [2Fe-2S]-[ferredoxin] + 2 S-adenosyl-L-methionine = (sulfur carrier)-H + biotin + 2 5'-deoxyadenosine + 2 L-methionine + 2 oxidized [2Fe-2S]-[ferredoxin]. The protein operates within cofactor biosynthesis; biotin biosynthesis; biotin from 7,8-diaminononanoate: step 2/2. Catalyzes the conversion of dethiobiotin (DTB) to biotin by the insertion of a sulfur atom into dethiobiotin via a radical-based mechanism. In Buchnera aphidicola subsp. Acyrthosiphon pisum (strain APS) (Acyrthosiphon pisum symbiotic bacterium), this protein is Biotin synthase.